Reading from the N-terminus, the 235-residue chain is Small ribosomal subunit protein uS3 (235 aa).

The KH type-2 domain occupies 39-107; the sequence is VRKFLNKELA…PAQINIAEVK (69 aa).

This sequence belongs to the universal ribosomal protein uS3 family. As to quaternary structure, part of the 30S ribosomal subunit. Forms a tight complex with proteins S10 and S14.

Binds the lower part of the 30S subunit head. Binds mRNA in the 70S ribosome, positioning it for translation. This is Small ribosomal subunit protein uS3 from Mannheimia succiniciproducens (strain KCTC 0769BP / MBEL55E).